The chain runs to 86 residues: Progonadoliberin-2 (86 aa).

Residues 1-24 (MVSVARLVFMLGPLLCLGAQLSSS) form the signal peptide. Glutamine 25 is subject to Pyrrolidone carboxylic acid. The residue at position 34 (glycine 34) is a Glycine amide.

The protein belongs to the GnRH family.

It localises to the secreted. Its function is as follows. Stimulates the secretion of gonadotropins. The polypeptide is Progonadoliberin-2 (gnrh2) (Oncorhynchus mykiss (Rainbow trout)).